Here is a 677-residue protein sequence, read N- to C-terminus: Electrogenic aspartate/glutamate antiporter SLC25A12, mitochondrial (677 aa).

Alanine 2 carries the post-translational modification N-acetylalanine. The interval 2-294 (AVKVHTTKRG…TLADIERIAP (293 aa)) is regulatory N-terminal domain. At 2–329 (AVKVHTTKRG…WLQIAESAYR (328 aa)) the chain is on the mitochondrial intermembrane side. EF-hand domains are found at residues 40 to 85 (VQRY…SVLC), 86 to 121 (APDS…TIIH), 122 to 156 (HHIP…FLQE), and 157 to 192 (LQLE…IRSH). Aspartate 65, threonine 67, aspartate 69, leucine 71, and glutamate 76 together coordinate Ca(2+). Residues 295-310 (LAEGALPYNLAELQRQ) form a linker loop domain region. A carrier domain region spans residues 320–612 (WLQIAESAYR…RWFYIDFGGL (293 aa)). Solcar repeat units lie at residues 324 to 416 (AESA…VRDK), 424 to 508 (IPLP…CKLL), and 516 to 604 (VGGI…LQRW). A helical transmembrane segment spans residues 330–347 (FTLGSVAGAVGATAVYPI). At 348 to 390 (DLVKTRMQNQRGTGSVVGELMYKNSFDCFKKVLRYEGFFGLYR) the chain is on the mitochondrial matrix side. Residues 391–410 (GLIPQLIGVAPEKAIKLTVN) form a helical membrane-spanning segment. Topologically, residues 411 to 433 (DFVRDKFTKRDGSIPLPAEILAG) are mitochondrial intermembrane. A helical transmembrane segment spans residues 434–447 (GCAGGSQVIFTNPL). At 448 to 482 (EIVKIRLQVAGEITTGPRVSALNVLQDLGLFGLYK) the chain is on the mitochondrial matrix side. A helical transmembrane segment spans residues 483–502 (GAKACFLRDIPFSAIYFPVY). Residues 503–521 (AHCKLLLADENGRVGGINL) are Mitochondrial intermembrane-facing. A helical transmembrane segment spans residues 522 to 539 (LTAGALAGVPAASLVTPA). The Mitochondrial matrix portion of the chain corresponds to 540–578 (DVIKTRLQVAARAGQTTYSGVVDCFRKILREEGPSAFWK). The helical transmembrane segment at 579–598 (GTAARVFRSSPQFGVTLVTY) threads the bilayer. The Mitochondrial intermembrane portion of the chain corresponds to 599–677 (ELLQRWFYID…AQPKAAAAAQ (79 aa)). Residues 613–677 (KPSGSEPTPK…AQPKAAAAAQ (65 aa)) form a C-terminal domain region.

Belongs to the mitochondrial carrier (TC 2.A.29) family. Homodimer (via N-terminus).

The protein localises to the mitochondrion inner membrane. It carries out the reaction L-aspartate(in) + L-glutamate(out) + H(+)(out) = L-aspartate(out) + L-glutamate(in) + H(+)(in). It catalyses the reaction 3-sulfino-L-alanine(out) + L-glutamate(in) + H(+)(in) = 3-sulfino-L-alanine(in) + L-glutamate(out) + H(+)(out). The catalysed reaction is 3-sulfino-L-alanine(out) + L-aspartate(in) = 3-sulfino-L-alanine(in) + L-aspartate(out). Mitochondrial electrogenic aspartate/glutamate antiporter that favors efflux of aspartate and entry of glutamate and proton within the mitochondria as part of the malate-aspartate shuttle. Also mediates the uptake of L-cysteinesulfinate (3-sulfino-L-alanine) by mitochondria in exchange of L-glutamate and proton. Can also exchange L-cysteinesulfinate with aspartate in their anionic form without any proton translocation. Lacks transport activity towards L-glutamine or gamma-aminobutyric acid (GABA). The polypeptide is Electrogenic aspartate/glutamate antiporter SLC25A12, mitochondrial (Mus musculus (Mouse)).